Reading from the N-terminus, the 453-residue chain is Probable L-galactonate transporter (453 aa).

Residues 1–23 are disordered; sequence MEKENITIDPRSSFTPSSSADIP. Over 1–42 the chain is Periplasmic; that stretch reads MEKENITIDPRSSFTPSSSADIPVPPDGLVQRSTRIKRIQTT. Polar residues predominate over residues 10 to 20; sequence PRSSFTPSSSA. A helical membrane pass occupies residues 43-63; the sequence is AMLLLFFAAVINYLDRSSLSV. Topologically, residues 64 to 71 are cytoplasmic; it reads ANLTIREE. Residues 72–92 form a helical membrane-spanning segment; it reads LGLSATEIGALLSVFSLAYGI. At 93-107 the chain is on the periplasmic side; it reads AQLPCGPLLDRKGPR. Residues 108 to 128 form a helical membrane-spanning segment; sequence LMLGLGMFFWSLFQAMSGMVH. The Cytoplasmic segment spans residues 129–174; it reads NFTQFVLVRIGMGIGEAPMNPCGVKVINDWFNIKERGRPMGFFNAA. The helical transmembrane segment at 175–195 threads the bilayer; sequence STIGVAVSPPILAAMMLVMGW. Residue R196 is a topological domain, periplasmic. The chain crosses the membrane as a helical span at residues 197–217; sequence GMFITIGVLGIFLAIGWYMLY. Residues 218 to 259 are Cytoplasmic-facing; that stretch reads RNREHVELTAVEQAYLNAGSVNARRDPLSFAEWRSLFRNRTM. A helical transmembrane segment spans residues 260 to 280; sequence WGMMLGFSGINYTAWLYLAWL. Residues 281–295 lie on the Periplasmic side of the membrane; sequence PGYLQTAYNLDLKST. The helical transmembrane segment at 296 to 316 threads the bilayer; that stretch reads GLMAAIPFLFGAAGMLVNGYV. The Cytoplasmic segment spans residues 317-332; that stretch reads TDWLVKGGMAPIKSRK. Residues 333 to 353 traverse the membrane as a helical segment; sequence ICIIAGMFCSAAFTLIVPQAT. Residues 354–359 lie on the Periplasmic side of the membrane; that stretch reads TSMTAV. A helical membrane pass occupies residues 360–380; that stretch reads LLIGMALFCIHFAGTSCWGLI. Residues 381–394 lie on the Cytoplasmic side of the membrane; sequence HVAVASRMTASVGS. A helical transmembrane segment spans residues 395–415; it reads IQNFASFICASFAPIITGFIV. Residues 416–422 are Periplasmic-facing; that stretch reads DTTHSFR. Residues 423-443 traverse the membrane as a helical segment; sequence LALIICGCVTAAGALAYIFLV. Residues 444–453 lie on the Cytoplasmic side of the membrane; that stretch reads RQPINDPRKD.

This sequence belongs to the major facilitator superfamily. Phthalate permease family.

Its subcellular location is the cell inner membrane. The catalysed reaction is L-galactonate(in) + H(+)(in) = L-galactonate(out) + H(+)(out). Functionally, probably responsible for the transport of L-galactonate from the periplasm across the inner membrane. Is essential for growth on L-galactonate as the sole carbon source. This is Probable L-galactonate transporter (lgoT) from Escherichia coli (strain K12).